The sequence spans 675 residues: Methionine--tRNA ligase (675 aa).

The 'HIGH' region signature appears at 15–25 (PYANGSIHLGH). 4 residues coordinate Zn(2+): cysteine 146, cysteine 149, cysteine 159, and cysteine 162. The short motif at 332 to 336 (KMSKS) is the 'KMSKS' region element. Lysine 335 contacts ATP. A tRNA-binding domain is found at 573–675 (DFAKVDMRIA…SGAQPGMQVK (103 aa)).

It belongs to the class-I aminoacyl-tRNA synthetase family. MetG type 1 subfamily. As to quaternary structure, homodimer. Requires Zn(2+) as cofactor.

The protein resides in the cytoplasm. It catalyses the reaction tRNA(Met) + L-methionine + ATP = L-methionyl-tRNA(Met) + AMP + diphosphate. Is required not only for elongation of protein synthesis but also for the initiation of all mRNA translation through initiator tRNA(fMet) aminoacylation. In Yersinia pseudotuberculosis serotype I (strain IP32953), this protein is Methionine--tRNA ligase.